A 676-amino-acid chain; its full sequence is MSDSSEATVKRPLDAHVGPSENAAKKLKIEQRTQADGIHEADVGITLFLSPELPGFRGQIKQRYTDFLVNEIDQEGKVIHLTDKGFKMPKKPQRSKEEVNAEKESEAARRQEFNVDPELRNQLVEIFGEEDVLKIESVYRTANKMETAKNFEDKSVRTKIHQLLREAFKNELESVTTDTNTFKIARSNRNSRTNKQEKINQTRDANGVENWGYGPSKDFIHFTLHKENKDTMEAVNVITKLLRVPSRVIRYAGTKDRRAVTCQRVSISKIGLDRLNALNRTLKGMIIGNYNFSDASLNLGDLKGNEFVVVIRDVTTGNSEVSLEEIVSNGCKSLSENGFINYFGMQRFGTFSISTHTIGRELLLSNWKKAAELILSDQDNVLPKSKEARKIWAETKDAALALKQMPRQCLAENALLYSLSNQRKEEDGTYSENAYYTAIMKIPRNLRTMYVHAYQSYVWNSIASKRIELHGLKLVVGDLVIDTSEKSPLISGIDDEDFDEDVREAQFIRAKAVTQEDIDSVKYTMEDVVLPSPGFDVLYPSNEELKQLYVDILKADNMDPFNMRRKVRDFSLAGSYRTVIQKPKSLEYRIIHYDDPSQQLVNTDLDILNNTRAKESGQKYMKAKLDRYMPDKGGEKTAVVLKFQLGTSAYATMALRELMKLETSRRGDMCDVKENI.

Disordered regions lie at residues 1-27 (MSDS…AKKL) and 87-110 (KMPK…AARR). Ser2 is subject to N-acetylserine. The span at 94–110 (RSKEEVNAEKESEAARR) shows a compositional bias: basic and acidic residues. Asp256 (nucleophile) is an active-site residue. Residues 338–582 (GFINYFGMQR…AGSYRTVIQK (245 aa)) form the TRUD domain.

Belongs to the pseudouridine synthase TruD family.

It localises to the nucleus. It is found in the cytoplasm. The enzyme catalyses uridine in 5S rRNA = pseudouridine in 5S rRNA. The catalysed reaction is uridine in snRNA = pseudouridine in snRNA. It carries out the reaction uridine(13) in tRNA = pseudouridine(13) in tRNA. It catalyses the reaction a uridine in mRNA = a pseudouridine in mRNA. Catalyzes pseudouridylation at position 35 in U2 snRNA stem-loop II region which induces particular conformation of the mRNA-U2 snRNA duplex and places the nucleophile in an accessible position for the first step of splicing. Also catalyzes pseudouridylation at position 56 in U2 snRNA. Also catalyzes pseudouridylation at position 50 in 5S rRNA, position 13 in cytoplasmic tRNAs, and position 35 in pre-tRNA(Tyr). Pseudouridine residues in tRNAs may stabilize the local RNA conformation, favor interactions with protein partners and play an important role in the stabilization of the codon-anticodon interaction with mRNA. Also catalyzes pseudouridylation of mRNAs in response to heat shock: mediates pseudouridylation of mRNAs with the consensus sequence 5'-UGUAR-3'. The protein is Multisubstrate pseudouridine synthase 7 of Saccharomyces cerevisiae (strain ATCC 204508 / S288c) (Baker's yeast).